Reading from the N-terminus, the 439-residue chain is GlutamylGlutaminyl-tRNA synthetase (439 aa).

Positions 6–16 match the 'HIGH' region motif; that stretch reads PSPTGDMHIGN. Residues 232–236 carry the 'KMSKS' region motif; the sequence is KMSKR. Residue lysine 235 coordinates ATP.

Belongs to the class-I aminoacyl-tRNA synthetase family. Glutamate--tRNA ligase type 1 subfamily. As to quaternary structure, monomer.

The protein resides in the cytoplasm. It catalyses the reaction tRNA(Glu) + L-glutamate + ATP = L-glutamyl-tRNA(Gln) + AMP + diphosphate. Its function is as follows. Aminoacylates tRNA(Gln) with glutamate. Does not aminoacylate tRNA(Glu). This chain is GlutamylGlutaminyl-tRNA synthetase (gltX2), found in Helicobacter pylori (strain ATCC 700392 / 26695) (Campylobacter pylori).